The sequence spans 252 residues: Chaperone protein AggD (252 aa).

Residues M1–A22 form the signal peptide.

Belongs to the periplasmic pilus chaperone family.

Its subcellular location is the periplasm. Its function is as follows. Involved in the biogenesis of the AAF/I fimbriae. The polypeptide is Chaperone protein AggD (aggD) (Escherichia coli).